Consider the following 145-residue polypeptide: Leghemoglobin-1 (145 aa).

A Globin domain is found at 3–145 (AFSDKQEALV…ELAAAIKKAY (143 aa)). 2 positions are modified to nitrated tyrosine: tyrosine 26 and tyrosine 31. Serine 46 provides a ligand contact to heme b. Phosphoserine is present on serine 46. Residue histidine 62 participates in O2 binding. Residues lysine 65, histidine 93, and lysine 96 each coordinate heme b. Tyrosine 134 carries the nitrated tyrosine modification.

The protein belongs to the plant globin family. As to quaternary structure, monomer. Post-translationally, nitrated in effective nodules and particularly in hypoxic conditions; this mechanism may play a protective role in the symbiosis by buffering toxic peroxynitrite NO(2)(-). Nitration level decrease during nodule senescence. Phosphorylation at Ser-46 disrupts the molecular environment of its porphyrin ring oxygen binding pocket, thus leading to a reduced oxygen consumption and to the delivery of oxygen O(2) to symbiosomes. As to expression, root nodules.

The protein localises to the cytoplasm. It localises to the cytosol. It is found in the nucleus. Its function is as follows. Leghemoglobin that reversibly binds oxygen O(2) through a pentacoordinated heme iron. In root nodules, facilitates the diffusion of oxygen to the bacteroids while preventing the bacterial nitrogenase from being inactivated by buffering dioxygen, nitric oxide and carbon monoxide, and promoting the formation of reactive oxygen species (ROS, e.g. H(2)O(2)). This role is essential for symbiotic nitrogen fixation (SNF). This chain is Leghemoglobin-1, found in Vigna unguiculata (Cowpea).